A 1360-amino-acid chain; its full sequence is Probable inactive protein kinase DDB_G0270444 (1360 aa).

4 WD repeats span residues 44–83, 109–152, 166–205, and 208–247; these read SSKR…IKQL, IRNI…AVYN, TTSA…IMGT, and GHSR…QITG. A Protein kinase domain is found at 636–954; that stretch reads EKSIQTYLSN…IEQALSHPFI (319 aa). The segment covering 959–979 has biased composition (low complexity); that stretch reads KQQQQQQQQKQQQQQQQQQQQ. Disordered stretches follow at residues 959–989, 1258–1311, and 1331–1360; these read KQQQ…DSLT, IISE…VEEE, and EVEE…SNDF. Coiled-coil stretches lie at residues 1014–1269 and 1297–1352; these read SKIK…QEGE and NASD…QVED. Positions 1291–1300 are enriched in basic and acidic residues; sequence LERDNKNASD. Acidic residues-rich tracts occupy residues 1301–1311 and 1331–1354; these read HDDEQQFVEEE and EVEE…EDDT.

This sequence belongs to the protein kinase superfamily. CMGC Ser/Thr protein kinase family.

In Dictyostelium discoideum (Social amoeba), this protein is Probable inactive protein kinase DDB_G0270444.